Reading from the N-terminus, the 443-residue chain is F-box only protein 39 (443 aa).

An F-box domain is found at Q13–R59.

As to quaternary structure, directly interacts with SKP1 and CUL1.

Substrate-recognition component of the SCF (SKP1-CUL1-F-box protein)-type E3 ubiquitin ligase complex. This is F-box only protein 39 (Fbxo39) from Rattus norvegicus (Rat).